The primary structure comprises 527 residues: Bifunctional dihydrofolate reductase-thymidylate synthase (527 aa).

The DHFR domain occupies 28 to 238 (PFSVVVASDE…KKYQFEKLVP (211 aa)). Val32 lines the substrate pocket. Residues Ala34 and 40-46 (GIGDGGT) contribute to the NADP(+) site. Residue Asp54 participates in substrate binding. Residues 84-86 (RKT) and 105-108 (LSRS) contribute to the NADP(+) site. Residues Ile160, Tyr166, and Thr184 each coordinate substrate. 161 to 168 (GGGTIYKQ) contributes to the NADP(+) binding site. The interval 243 to 527 (EEQYLNLVGR…YPVISMEMAV (285 aa)) is thymidylate synthase. Arg263 provides a ligand contact to dUMP. The active site involves Cys409. DUMP-binding positions include His410, 428–432 (QRSCD), Asn440, and 470–472 (HVY).

The protein in the N-terminal section; belongs to the dihydrofolate reductase family. In the C-terminal section; belongs to the thymidylate synthase family. Homodimer.

The catalysed reaction is dUMP + (6R)-5,10-methylene-5,6,7,8-tetrahydrofolate = 7,8-dihydrofolate + dTMP. The enzyme catalyses (6S)-5,6,7,8-tetrahydrofolate + NADP(+) = 7,8-dihydrofolate + NADPH + H(+). It functions in the pathway pyrimidine metabolism; dTTP biosynthesis. It participates in cofactor biosynthesis; tetrahydrofolate biosynthesis; 5,6,7,8-tetrahydrofolate from 7,8-dihydrofolate: step 1/1. In terms of biological role, bifunctional enzyme. Involved in de novo dTMP biosynthesis. Key enzyme in folate metabolism. Catalyzes an essential reaction for de novo glycine and purine synthesis, DNA precursor synthesis, and for the conversion of dUMP to dTMP. The polypeptide is Bifunctional dihydrofolate reductase-thymidylate synthase (Trypanosoma brucei brucei).